The chain runs to 108 residues: Thioredoxin Asp f 28 (108 aa).

A Thioredoxin domain is found at 1–108 (MSHGKVIAVD…LEEMIKSISA (108 aa)). Active-site nucleophile residues include Cys33 and Cys36. The cysteines at positions 33 and 36 are disulfide-linked.

It belongs to the thioredoxin family.

Its function is as follows. Participates in various redox reactions through the reversible oxidation of its active center dithiol to a disulfide and catalyzes dithiol-disulfide exchange reactions. This Aspergillus fumigatus (Neosartorya fumigata) protein is Thioredoxin Asp f 28.